The primary structure comprises 385 residues: Alanine--glyoxylate aminotransferase 1 (385 aa).

An N6-(pyridoxal phosphate)lysine modification is found at Lys-201. Arg-354 provides a ligand contact to substrate.

The protein belongs to the class-V pyridoxal-phosphate-dependent aminotransferase family. As to quaternary structure, homodimer. The cofactor is pyridoxal 5'-phosphate.

It catalyses the reaction glyoxylate + L-alanine = glycine + pyruvate. The protein operates within amino-acid biosynthesis; glycine biosynthesis; glycine from glyoxylate: step 1/1. Functionally, has alanine:glyoxylate aminotransferase activity. The chain is Alanine--glyoxylate aminotransferase 1 from Saccharomyces cerevisiae (strain ATCC 204508 / S288c) (Baker's yeast).